Here is a 385-residue protein sequence, read N- to C-terminus: WD repeat-containing protein 74 (385 aa).

6 WD repeats span residues 40–80 (RREE…FQGQ), 83–122 (CPGG…ASSD), 128–168 (RVGP…EPLF), 179–220 (DLRV…RRPV), 224–266 (TYGE…GCLK), and 267–306 (GLAG…GLEH). Ser-214 bears the Phosphoserine mark. Lys-311 carries the post-translational modification N6-methyllysine. Positions 320-385 (SGRDNWEDEP…KKKRPGSTSS (66 aa)) are required for nucleolar and nuclear location. Positions 323 to 385 (DNWEDEPQEP…KKKRPGSTSS (63 aa)) are disordered. Over residues 372–385 (ARRRKKKRPGSTSS) the composition is skewed to basic residues.

In terms of assembly, isoform 1 interacts (through WDR repeats) with NVL; the interaction is independent of RNA or pre-60S ribosome particles. Isoform 2 does not interact with NVL. Interacts with MTREX; the interaction dissociation in a late stage of rRNA synthesis is required for appropriate maturation of pre-60S particles and depends on the ATPase activity of NVL.

The protein resides in the nucleus. It localises to the nucleolus. Functionally, regulatory protein of the MTREX-exosome complex involved in the synthesis of the 60S ribosomal subunit. Participates in an early cleavage of the pre-rRNA processing pathway in cooperation with NVL. The chain is WD repeat-containing protein 74 (WDR74) from Bos taurus (Bovine).